The following is a 197-amino-acid chain: Imidazoleglycerol-phosphate dehydratase (197 aa).

The protein belongs to the imidazoleglycerol-phosphate dehydratase family.

The protein resides in the cytoplasm. The catalysed reaction is D-erythro-1-(imidazol-4-yl)glycerol 3-phosphate = 3-(imidazol-4-yl)-2-oxopropyl phosphate + H2O. Its pathway is amino-acid biosynthesis; L-histidine biosynthesis; L-histidine from 5-phospho-alpha-D-ribose 1-diphosphate: step 6/9. This chain is Imidazoleglycerol-phosphate dehydratase, found in Rhodopseudomonas palustris (strain BisB5).